Consider the following 212-residue polypeptide: ATP-dependent Clp protease proteolytic subunit (212 aa).

Serine 106 acts as the Nucleophile in catalysis. Histidine 131 is an active-site residue.

Belongs to the peptidase S14 family. Fourteen ClpP subunits assemble into 2 heptameric rings which stack back to back to give a disk-like structure with a central cavity, resembling the structure of eukaryotic proteasomes.

The protein localises to the cytoplasm. It catalyses the reaction Hydrolysis of proteins to small peptides in the presence of ATP and magnesium. alpha-casein is the usual test substrate. In the absence of ATP, only oligopeptides shorter than five residues are hydrolyzed (such as succinyl-Leu-Tyr-|-NHMec, and Leu-Tyr-Leu-|-Tyr-Trp, in which cleavage of the -Tyr-|-Leu- and -Tyr-|-Trp bonds also occurs).. Its function is as follows. Cleaves peptides in various proteins in a process that requires ATP hydrolysis. Has a chymotrypsin-like activity. Plays a major role in the degradation of misfolded proteins. The sequence is that of ATP-dependent Clp protease proteolytic subunit from Rhodopseudomonas palustris (strain ATCC BAA-98 / CGA009).